The following is a 203-amino-acid chain: Nascent polypeptide-associated complex subunit alpha (203 aa).

The segment covering 1-19 (MADPRIEELPDEEVPKTNV) has biased composition (basic and acidic residues). The tract at residues 1–45 (MADPRIEELPDEEVPKTNVEDAADSSESEAGEEPTIPGGAAVTIH) is disordered. The segment covering 21-32 (DAADSSESEAGE) has biased composition (acidic residues). Residues 46 to 111 (SRNEKKARKA…AKIEDLNSQA (66 aa)) form the NAC-A/B domain. A disordered region spans residues 118–167 (QLAAAEAAGEHAGHDHDHDKGKGKAPETEAKKEEEEDDGEEVDETGLEPK). The span at 125–150 (AGEHAGHDHDHDKGKGKAPETEAKKE) shows a compositional bias: basic and acidic residues. The segment covering 151-163 (EEEDDGEEVDETG) has biased composition (acidic residues). The region spanning 164-203 (LEPKDIDLVMAQANVSRKKAVKALRENDNDIVNSIMALSI) is the UBA domain.

This sequence belongs to the NAC-alpha family. As to quaternary structure, part of the nascent polypeptide-associated complex (NAC), consisting of egd2 and egd1. NAC associates with ribosomes via egd1.

It localises to the cytoplasm. Its subcellular location is the nucleus. Functionally, component of the nascent polypeptide-associated complex (NAC), a dynamic component of the ribosomal exit tunnel, protecting the emerging polypeptides from interaction with other cytoplasmic proteins to ensure appropriate nascent protein targeting. The NAC complex also promotes mitochondrial protein import by enhancing productive ribosome interactions with the outer mitochondrial membrane and blocks the inappropriate interaction of ribosomes translating non-secretory nascent polypeptides with translocation sites in the membrane of the endoplasmic reticulum. Egd2 may also be involved in transcription regulation. The chain is Nascent polypeptide-associated complex subunit alpha (egd2) from Emericella nidulans (strain FGSC A4 / ATCC 38163 / CBS 112.46 / NRRL 194 / M139) (Aspergillus nidulans).